We begin with the raw amino-acid sequence, 304 residues long: NuA3 HAT complex component PDP3 (304 aa).

Residues T7–D68 enclose the PWWP domain. Positions K145–K195 are disordered. The segment covering I151 to P168 has biased composition (basic and acidic residues).

Component of the NuA3 histone acetyltransferase (HAT) complex. The NuA3 HAT complex has 2 functionally distinct forms that participate in transcription. The NuA3a HAT complex is composed of at least NTO1, SAS3, TAF14, YNG1 and EAF6. The NuA3b HAT complex contains an additional subunit, PDP3.

It localises to the nucleus. The protein resides in the cytoplasm. In terms of biological role, histone-binding component of the NuA3b histone acetyltransferase complex. Targets the NuA3b HAT complex via histone H3K36me3 to the coding regions of actively transcribed genes to coordinate transcription elongation. Stimulates elongation by RNA polymerase II in vitro. This is NuA3 HAT complex component PDP3 from Saccharomyces cerevisiae (strain ATCC 204508 / S288c) (Baker's yeast).